The chain runs to 631 residues: Integrator complex subunit 10 (631 aa).

Residues 545-570 (FELTSSPNSSGTPTATTVAGGSQSRR) show a composition bias toward polar residues. A disordered region spans residues 545–577 (FELTSSPNSSGTPTATTVAGGSQSRRIGTRGAD).

Belongs to the Integrator subunit 10 family. Belongs to the multiprotein complex Integrator, at least composed of IntS1, IntS2, IntS3, IntS4, omd/IntS5, IntS6, defl/IntS7, IntS8, IntS9, IntS10, IntS11, IntS12, asun/IntS13, IntS14 and IntS15. The core complex associates with protein phosphatase 2A subunits mts/PP2A and Pp2A-29B, to form the Integrator-PP2A (INTAC) complex.

It is found in the nucleus. Component of the integrator complex, a multiprotein complex that terminates RNA polymerase II (Pol II) transcription in the promoter-proximal region of genes. The integrator complex provides a quality checkpoint during transcription elongation by driving premature transcription termination of transcripts that are unfavorably configured for transcriptional elongation: the complex terminates transcription by (1) catalyzing dephosphorylation of the C-terminal domain (CTD) of Pol II subunit Polr2A/Rbp1 and Spt5, and (2) degrading the exiting nascent RNA transcript via endonuclease activity. The integrator complex is also involved in the 3'-end processing of the U7 snRNA, and also the spliceosomal snRNAs U1, U2, U4 and U5. This chain is Integrator complex subunit 10, found in Drosophila melanogaster (Fruit fly).